The sequence spans 2082 residues: Polyketide synthase ThaQ (2082 aa).

The segment at 398–468 (NDARRAGSAR…DSAHDSAHAA (71 aa)) is disordered. 3 stretches are compositionally biased toward basic and acidic residues: residues 399–411 (DARR…RDAR), 419–430 (HGARHEAAHDAQ), and 439–468 (ADAH…AHAA). In terms of domain architecture, Carrier 1 spans 470 to 546 (ALRREGRAYL…ALLDHLLAAH (77 aa)). Ser507 bears the O-(pantetheine 4'-phosphoryl)serine mark. 2 stretches are compositionally biased toward low complexity: residues 560 to 582 (APAR…RAAP) and 593 to 605 (DTPS…APAR). The interval 560 to 655 (APARGVGARA…RYAPRAPHPD (96 aa)) is disordered. Pro residues predominate over residues 606-631 (PDQPAPSGPPAQPAQPAPRADTPPPA). A Ketosynthase family 3 (KS3) domain is found at 658-1077 (AEPVAIIGIS…GVNAHVVLEE (420 aa)). Disordered regions lie at residues 1250 to 1269 (APGT…EAAE) and 1603 to 1653 (ARGP…VKSD). 2 stretches are compositionally biased toward low complexity: residues 1256–1269 (ASAG…EAAE) and 1612–1624 (SPDA…RAQA). The segment covering 1640–1653 (ADSKAGPKSEVKSD) has biased composition (basic and acidic residues). One can recognise a Carrier 2 domain in the interval 1669–1743 (ASVAASVEDA…ALVRAVAEAV (75 aa)). Ser1703 carries the O-(pantetheine 4'-phosphoryl)serine modification. An AB hydrolase-1 domain is found at 1792 to 2022 (PRVVLIPGLG…GAGHAVFLTH (231 aa)). A compositionally biased stretch (low complexity) spans 2045-2067 (GAAESVESVEATEAAEAARSPAV). The segment at 2045 to 2082 (GAAESVESVEATEAAEAARSPAVARRRATDDAPVGSDA) is disordered.

The cofactor is pantetheine 4'-phosphate.

The protein resides in the cytoplasm. It functions in the pathway antibiotic biosynthesis. Its function is as follows. Involved in production of the polyketide antibiotic thailandamide. The polypeptide is Polyketide synthase ThaQ (Burkholderia thailandensis (strain ATCC 700388 / DSM 13276 / CCUG 48851 / CIP 106301 / E264)).